A 75-amino-acid polypeptide reads, in one-letter code: UPF0154 protein MYPE400 (75 aa).

The chain crosses the membrane as a helical span at residues 5–27 (IGLCLGLGIPISLIIGAVIGYYF).

The protein belongs to the UPF0154 family.

Its subcellular location is the membrane. The sequence is that of UPF0154 protein MYPE400 from Malacoplasma penetrans (strain HF-2) (Mycoplasma penetrans).